We begin with the raw amino-acid sequence, 577 residues long: Urease subunit alpha (577 aa).

Residues 136–577 (GAIDCHVHLI…LPMAQRYFLF (442 aa)) enclose the Urease domain. Positions 141, 143, and 224 each coordinate Ni(2+). An N6-carboxylysine modification is found at Lys-224. His-226 is a substrate binding site. Ni(2+) contacts are provided by His-253 and His-279. The active-site Proton donor is His-327. Asp-367 serves as a coordination point for Ni(2+).

This sequence belongs to the metallo-dependent hydrolases superfamily. Urease alpha subunit family. In terms of assembly, heterotrimer of UreA (gamma), UreB (beta) and UreC (alpha) subunits. Three heterotrimers associate to form the active enzyme. Ni cation serves as cofactor. In terms of processing, carboxylation allows a single lysine to coordinate two nickel ions.

The protein resides in the cytoplasm. The enzyme catalyses urea + 2 H2O + H(+) = hydrogencarbonate + 2 NH4(+). Its pathway is nitrogen metabolism; urea degradation; CO(2) and NH(3) from urea (urease route): step 1/1. The protein is Urease subunit alpha of Mycobacterium marinum (strain ATCC BAA-535 / M).